Here is a 275-residue protein sequence, read N- to C-terminus: Large ribosomal subunit protein uL2 (275 aa).

Residues 223 to 260 (VAMNPVDHPHGGGEGRTSGGRHPVSPWGLPTKGYKTRS) form a disordered region.

The protein belongs to the universal ribosomal protein uL2 family. In terms of assembly, part of the 50S ribosomal subunit. Forms a bridge to the 30S subunit in the 70S ribosome.

One of the primary rRNA binding proteins. Required for association of the 30S and 50S subunits to form the 70S ribosome, for tRNA binding and peptide bond formation. It has been suggested to have peptidyltransferase activity; this is somewhat controversial. Makes several contacts with the 16S rRNA in the 70S ribosome. This is Large ribosomal subunit protein uL2 from Legionella pneumophila (strain Paris).